The sequence spans 462 residues: ATP synthase subunit beta (462 aa).

Residue 151–158 (GGAGVGKT) participates in ATP binding.

It belongs to the ATPase alpha/beta chains family. F-type ATPases have 2 components, CF(1) - the catalytic core - and CF(0) - the membrane proton channel. CF(1) has five subunits: alpha(3), beta(3), gamma(1), delta(1), epsilon(1). CF(0) has four main subunits: a(1), b(1), b'(1) and c(9-12).

It localises to the cell inner membrane. It catalyses the reaction ATP + H2O + 4 H(+)(in) = ADP + phosphate + 5 H(+)(out). Its function is as follows. Produces ATP from ADP in the presence of a proton gradient across the membrane. The catalytic sites are hosted primarily by the beta subunits. The sequence is that of ATP synthase subunit beta from Chlorobium chlorochromatii (strain CaD3).